Reading from the N-terminus, the 743-residue chain is TSL-kinase interacting protein 1 (743 aa).

The region spanning 53–104 (RQWAAWTHQEEESFFTALRQVGKNFEKITSRVQSKNKDQVRHYYYRLVRRMN) is the SANT domain. Disordered stretches follow at residues 486–523 (SGVHDRPARSRDDYEPASTSITPLEHLSGGNAQSPGEW) and 626–679 (SPKG…TPCG). Residues 488–499 (VHDRPARSRDDY) show a composition bias toward basic and acidic residues.

Interacts only with active kinase forms of TOUSLED. Interacts with SNL1. Post-translationally, phosphorylated in vitro by TOUSLED. Expressed in flowers, roots and leaves.

It localises to the nucleus. This Arabidopsis thaliana (Mouse-ear cress) protein is TSL-kinase interacting protein 1 (TKI1).